We begin with the raw amino-acid sequence, 86 residues long: Small ribosomal subunit protein eS27 (86 aa).

A C4-type zinc finger spans residues 39 to 61 (CQGCFNITTVFSHSQTVVVCPGC).

It belongs to the eukaryotic ribosomal protein eS27 family. Zn(2+) serves as cofactor.

In Hordeum vulgare (Barley), this protein is Small ribosomal subunit protein eS27 (RPS27).